The sequence spans 155 residues: Ferredoxin-6, chloroplastic (155 aa).

Residues M1–A58 constitute a chloroplast transit peptide. The 92-residue stretch at H61 to E152 folds into the 2Fe-2S ferredoxin-type domain. Residues C98, C103, C106, and C136 each coordinate [2Fe-2S] cluster.

This sequence belongs to the 2Fe2S plant-type ferredoxin family. The cofactor is [2Fe-2S] cluster.

Its subcellular location is the plastid. It localises to the chloroplast. Its function is as follows. Ferredoxins are iron-sulfur proteins that transfer electrons in a wide variety of metabolic reactions. The polypeptide is Ferredoxin-6, chloroplastic (FDX6) (Zea mays (Maize)).